A 658-amino-acid chain; its full sequence is Translation factor GUF1, mitochondrial (658 aa).

Residues 1 to 40 (MRGCLQTVRWLTSAWQRPRSYSPLSRAAPCRFFNVSIPRN) constitute a mitochondrion transit peptide. A tr-type G domain is found at 60–240 (DRFRNFCIVA…TVVEQIPAPV (181 aa)). Residues 69–76 (AHVDHGKS), 133–137 (DTPGH), and 187–190 (NKVD) each bind GTP.

The protein belongs to the TRAFAC class translation factor GTPase superfamily. Classic translation factor GTPase family. LepA subfamily.

The protein resides in the mitochondrion inner membrane. The enzyme catalyses GTP + H2O = GDP + phosphate + H(+). In terms of biological role, promotes mitochondrial protein synthesis. May act as a fidelity factor of the translation reaction, by catalyzing a one-codon backward translocation of tRNAs on improperly translocated ribosomes. Binds to mitochondrial ribosomes in a GTP-dependent manner. The polypeptide is Translation factor GUF1, mitochondrial (Paracoccidioides lutzii (strain ATCC MYA-826 / Pb01) (Paracoccidioides brasiliensis)).